The sequence spans 910 residues: Protein translocase subunit SecA (910 aa).

ATP is bound by residues Q87, 105–109 (GEGKT), and D508. A disordered region spans residues 848-910 (RLSQSQFQHQ…KYKHCHGQLS (63 aa)). Positions 869–880 (AQVQAAQQGVAQ) are enriched in low complexity. Residues C894, C896, C905, and H906 each coordinate Zn(2+). The span at 900-910 (KKYKHCHGQLS) shows a compositional bias: basic residues.

The protein belongs to the SecA family. In terms of assembly, monomer and homodimer. Part of the essential Sec protein translocation apparatus which comprises SecA, SecYEG and auxiliary proteins SecDF-YajC and YidC. Requires Zn(2+) as cofactor.

It is found in the cell inner membrane. Its subcellular location is the cytoplasm. It catalyses the reaction ATP + H2O + cellular proteinSide 1 = ADP + phosphate + cellular proteinSide 2.. In terms of biological role, part of the Sec protein translocase complex. Interacts with the SecYEG preprotein conducting channel. Has a central role in coupling the hydrolysis of ATP to the transfer of proteins into and across the cell membrane, serving both as a receptor for the preprotein-SecB complex and as an ATP-driven molecular motor driving the stepwise translocation of polypeptide chains across the membrane. This chain is Protein translocase subunit SecA, found in Stenotrophomonas maltophilia (strain K279a).